The following is a 507-amino-acid chain: AMSH-like ubiquitin thioesterase 1 (507 aa).

Positions 333–463 (LHIATSMMDT…IFRLTTPGGM (131 aa)) constitute an MPN domain. Residues histidine 411, histidine 413, aspartate 424, histidine 426, cysteine 469, histidine 475, and histidine 477 each contribute to the Zn(2+) site. Positions 411 to 424 (HTHPTQSCFMSSID) match the JAMM motif motif.

The protein belongs to the peptidase M67C family. The cofactor is Zn(2+).

Its subcellular location is the membrane. It localises to the cytoplasm. Functionally, zinc metalloprotease that cleaves 'Lys-48'- and 'Lys-63'-linked polyubiquitin chains. This is AMSH-like ubiquitin thioesterase 1 (AMSH1) from Arabidopsis thaliana (Mouse-ear cress).